The sequence spans 483 residues: Probable cytochrome P450 517A4 (483 aa).

The helical transmembrane segment at 1 to 21 (MEIVNVLLFLIILFLVKDFVK) threads the bilayer. Cys-429 lines the heme pocket.

It belongs to the cytochrome P450 family. The cofactor is heme.

The protein resides in the membrane. The protein is Probable cytochrome P450 517A4 (cyp517A4) of Dictyostelium discoideum (Social amoeba).